The following is a 211-amino-acid chain: Type II secretion system protein J (211 aa).

The propeptide at 1–7 (MRPRAAG) is leader sequence. An N-methylphenylalanine modification is found at Phe-8. A helical transmembrane segment spans residues 8 to 28 (FTLIEVLLATMLLVGGLALAF).

This sequence belongs to the GSP J family.

The protein localises to the membrane. In terms of biological role, involved in a type II secretion system (T2SS, formerly general secretion pathway, GSP) for the export of proteins. This is Type II secretion system protein J (xpsJ) from Xanthomonas campestris pv. campestris (strain ATCC 33913 / DSM 3586 / NCPPB 528 / LMG 568 / P 25).